Consider the following 155-residue polypeptide: Endoribonuclease YbeY (155 aa).

Zn(2+) contacts are provided by histidine 120, histidine 124, and histidine 130.

The protein belongs to the endoribonuclease YbeY family. The cofactor is Zn(2+).

It is found in the cytoplasm. In terms of biological role, single strand-specific metallo-endoribonuclease involved in late-stage 70S ribosome quality control and in maturation of the 3' terminus of the 16S rRNA. The sequence is that of Endoribonuclease YbeY from Staphylococcus aureus (strain Mu3 / ATCC 700698).